The sequence spans 113 residues: Mini zinc finger protein 3 (113 aa).

The ZF-HD dimerization-type; degenerate zinc finger occupies 24 to 83; sequence YGECRRNHAASTGGHAVDGCREFIAAEDGGGGNSTGAVGVAAAALKCAACGCHRSFHRRV. The tract at residues 93–113 is disordered; it reads DCDSGDTSSSSPSSSSSLSSE. Residues 97–113 are compositionally biased toward low complexity; the sequence is GDTSSSSPSSSSSLSSE.

Homo- and heterodimers.

The protein resides in the cytoplasm. Functionally, inhibits zinc finger homeodomain (ZHD) transcription factors, by interacting with them to prevent both their nuclear localization and their DNA-binding properties. The sequence is that of Mini zinc finger protein 3 (MIF3) from Oryza sativa subsp. indica (Rice).